Consider the following 262-residue polypeptide: Phosphatase SCO2771 (262 aa).

Displays phosphatase activity against p-nitrophenyl phosphate (pNPP) in vitro; however, the physiological substrate is unknown. This chain is Phosphatase SCO2771, found in Streptomyces coelicolor (strain ATCC BAA-471 / A3(2) / M145).